The primary structure comprises 386 residues: Succinate--CoA ligase [ADP-forming] subunit beta (386 aa).

The region spanning 9–244 (KEVLRKYGVV…LDEEDADEIE (236 aa)) is the ATP-grasp domain. ATP contacts are provided by residues Lys-46, 53–55 (GRG), Glu-99, Ala-102, and Glu-107. Mg(2+) is bound by residues Asn-199 and Asp-213. Substrate-binding positions include Asn-264 and 321–323 (GIM).

The protein belongs to the succinate/malate CoA ligase beta subunit family. Heterotetramer of two alpha and two beta subunits. Mg(2+) serves as cofactor.

The enzyme catalyses succinate + ATP + CoA = succinyl-CoA + ADP + phosphate. It catalyses the reaction GTP + succinate + CoA = succinyl-CoA + GDP + phosphate. It participates in carbohydrate metabolism; tricarboxylic acid cycle; succinate from succinyl-CoA (ligase route): step 1/1. Its function is as follows. Succinyl-CoA synthetase functions in the citric acid cycle (TCA), coupling the hydrolysis of succinyl-CoA to the synthesis of either ATP or GTP and thus represents the only step of substrate-level phosphorylation in the TCA. The beta subunit provides nucleotide specificity of the enzyme and binds the substrate succinate, while the binding sites for coenzyme A and phosphate are found in the alpha subunit. In Azoarcus sp. (strain BH72), this protein is Succinate--CoA ligase [ADP-forming] subunit beta.